Reading from the N-terminus, the 176-residue chain is Large ribosomal subunit protein uL16 (176 aa).

This sequence belongs to the universal ribosomal protein uL16 family.

The polypeptide is Large ribosomal subunit protein uL16 (Halorubrum lacusprofundi (strain ATCC 49239 / DSM 5036 / JCM 8891 / ACAM 34)).